The chain runs to 172 residues: Small ribosomal subunit protein uS5 (172 aa).

The 64-residue stretch at Leu-17–Val-80 folds into the S5 DRBM domain.

It belongs to the universal ribosomal protein uS5 family. In terms of assembly, part of the 30S ribosomal subunit. Contacts proteins S4 and S8.

With S4 and S12 plays an important role in translational accuracy. Functionally, located at the back of the 30S subunit body where it stabilizes the conformation of the head with respect to the body. This is Small ribosomal subunit protein uS5 from Cupriavidus taiwanensis (strain DSM 17343 / BCRC 17206 / CCUG 44338 / CIP 107171 / LMG 19424 / R1) (Ralstonia taiwanensis (strain LMG 19424)).